A 393-amino-acid chain; its full sequence is L-rhamnonate dehydratase (393 aa).

The substrate site is built by H22 and R48. Mg(2+) contacts are provided by D214, E241, and E269. The active-site Proton acceptor is H319. E339 contributes to the substrate binding site.

This sequence belongs to the mandelate racemase/muconate lactonizing enzyme family. RhamD subfamily. Homooctamer; tetramer of dimers. Requires Mg(2+) as cofactor.

It carries out the reaction L-rhamnonate = 2-dehydro-3-deoxy-L-rhamnonate + H2O. Catalyzes the dehydration of L-rhamnonate to 2-keto-3-deoxy-L-rhamnonate (KDR). This Azorhizobium caulinodans (strain ATCC 43989 / DSM 5975 / JCM 20966 / LMG 6465 / NBRC 14845 / NCIMB 13405 / ORS 571) protein is L-rhamnonate dehydratase.